The sequence spans 124 residues: Ribulose bisphosphate carboxylase small subunit (124 aa).

It belongs to the RuBisCO small chain family. As to quaternary structure, heterohexadecamer of 8 large and 8 small subunits.

RuBisCO catalyzes two reactions: the carboxylation of D-ribulose 1,5-bisphosphate, the primary event in carbon dioxide fixation, as well as the oxidative fragmentation of the pentose substrate. Both reactions occur simultaneously and in competition at the same active site. Although the small subunit is not catalytic it is essential for maximal activity. The chain is Ribulose bisphosphate carboxylase small subunit from Hydrogenophilus thermoluteolus (Pseudomonas hydrogenothermophila).